We begin with the raw amino-acid sequence, 188 residues long: Putative ankyrin repeat protein FPV230 (188 aa).

ANK repeat units lie at residues 2-31 (ENELKLYYAVSSQNENLVIQLLNKGYNPNA), 36-65 (KYMIPLHKAVECRNVDITKHLLSNGADANV), 135-164 (LGSTPLHIASKYNNKTMVKFFLERGADINI), and 168-187 (NNNTPLIYAVCSVIRLYLKC).

The polypeptide is Putative ankyrin repeat protein FPV230 (Vertebrata (FPV)).